The chain runs to 450 residues: Flavin-containing monooxygenase FMO GS-OX-like 5 (450 aa).

17–22 (GAGPAG) serves as a coordination point for FAD. An NADP(+)-binding site is contributed by 215-220 (GNSSSA).

The protein belongs to the FMO family. It depends on FAD as a cofactor.

In terms of biological role, catalyzes the conversion of methylthioalkyl glucosinolates of any chain length into methylsulfinylalkyl glucosinolates. This chain is Flavin-containing monooxygenase FMO GS-OX-like 5, found in Arabidopsis thaliana (Mouse-ear cress).